We begin with the raw amino-acid sequence, 84 residues long: Cytochrome b559 subunit alpha (84 aa).

A helical transmembrane segment spans residues 21–35; sequence VIHSITIPSLFIAGW. Residue His-23 participates in heme binding.

This sequence belongs to the PsbE/PsbF family. As to quaternary structure, heterodimer of an alpha subunit and a beta subunit. PSII is composed of 1 copy each of membrane proteins PsbA, PsbB, PsbC, PsbD, PsbE, PsbF, PsbH, PsbI, PsbJ, PsbK, PsbL, PsbM, PsbT, PsbX, PsbY, PsbZ, Psb30/Ycf12, at least 3 peripheral proteins of the oxygen-evolving complex and a large number of cofactors. It forms dimeric complexes. The cofactor is heme b.

The protein localises to the plastid membrane. Its function is as follows. This b-type cytochrome is tightly associated with the reaction center of photosystem II (PSII). PSII is a light-driven water:plastoquinone oxidoreductase that uses light energy to abstract electrons from H(2)O, generating O(2) and a proton gradient subsequently used for ATP formation. It consists of a core antenna complex that captures photons, and an electron transfer chain that converts photonic excitation into a charge separation. The chain is Cytochrome b559 subunit alpha from Cuscuta gronovii (Common dodder).